The sequence spans 546 residues: Thermolysin (546 aa).

The first 25 residues, 1-25 (MDKRAMLGAIGLAFGLMAWPFGASA), serve as a signal peptide directing secretion. A propeptide spans 26-228 (KEKSMVWNEQ…EAKPGGGQPV (203 aa)) (activation peptide). 4 residues coordinate Ca(2+): D287, D289, Q291, and D368. Residue H372 coordinates Zn(2+). E373 is a catalytic residue. Residues H376 and E396 each contribute to the Zn(2+) site. Ca(2+) contacts are provided by N413, D415, E417, E420, Y423, T424, I427, and D430. H461 functions as the Proton donor in the catalytic mechanism.

Belongs to the peptidase M4 family. Ca(2+) is required as a cofactor. The cofactor is Zn(2+).

It localises to the secreted. It catalyses the reaction Preferential cleavage: Xaa-|-Leu &gt; Xaa-|-Phe.. Extracellular zinc metalloprotease. In Bacillus caldolyticus, this protein is Thermolysin (npr).